Consider the following 200-residue polypeptide: NADH-quinone oxidoreductase subunit C (200 aa).

Belongs to the complex I 30 kDa subunit family. As to quaternary structure, NDH-1 is composed of 14 different subunits. Subunits NuoB, C, D, E, F, and G constitute the peripheral sector of the complex.

The protein resides in the cell inner membrane. It carries out the reaction a quinone + NADH + 5 H(+)(in) = a quinol + NAD(+) + 4 H(+)(out). Its function is as follows. NDH-1 shuttles electrons from NADH, via FMN and iron-sulfur (Fe-S) centers, to quinones in the respiratory chain. The immediate electron acceptor for the enzyme in this species is believed to be ubiquinone. Couples the redox reaction to proton translocation (for every two electrons transferred, four hydrogen ions are translocated across the cytoplasmic membrane), and thus conserves the redox energy in a proton gradient. This is NADH-quinone oxidoreductase subunit C from Burkholderia mallei (strain NCTC 10247).